We begin with the raw amino-acid sequence, 522 residues long: Protein disulfide-isomerase (522 aa).

Residues 1 to 28 (MKFSAGAVLSWSSLLLASSVFAQQEAVA) constitute a signal peptide (or 22). A Thioredoxin 1 domain is found at 29–141 (PEDSAVVKLA…VQFMIKQSQP (113 aa)). Catalysis depends on nucleophile residues C61 and C64. A disulfide bridge links C61 with C64. N82, N117, N155, and N174 each carry an N-linked (GlcNAc...) asparagine glycan. The Thioredoxin 2 domain occupies 356–485 (FLKGDASPIV…LFDFIKENGH (130 aa)). Residues C406 and C409 each act as nucleophile in the active site. A disulfide bond links C406 and C409. N425 carries N-linked (GlcNAc...) asparagine glycosylation. The segment at 497–522 (AQEKAAEEADADAELADEEDAIHDEL) is disordered. Positions 504–522 (EADADAELADEEDAIHDEL) are enriched in acidic residues. Residues 519–522 (HDEL) carry the Prevents secretion from ER motif.

This sequence belongs to the protein disulfide isomerase family. As to quaternary structure, interacts with EPS1, KAR2 and MNL1. Post-translationally, the N-terminus is blocked.

It localises to the endoplasmic reticulum lumen. It carries out the reaction Catalyzes the rearrangement of -S-S- bonds in proteins.. Functionally, protein disulfide isomerase of ER lumen required for formation of disulfide bonds in secretory and cell-surface proteins and which unscrambles non-native disulfide bonds. Forms a complex with MNL1 to process unfolded protein-bound Man8GlcNAc2 oligosaccharides to Man7GlcNAc2, promoting degradation in unfolded protein response. This Saccharomyces cerevisiae (strain ATCC 204508 / S288c) (Baker's yeast) protein is Protein disulfide-isomerase (PDI1).